The sequence spans 580 residues: Threonine--tRNA ligase (580 aa).

A catalytic region spans residues 179-476 (DHRKIGKDLN…LLEQTKGILP (298 aa)). 3 residues coordinate Zn(2+): cysteine 272, histidine 323, and histidine 453.

Belongs to the class-II aminoacyl-tRNA synthetase family. Homodimer. Zn(2+) serves as cofactor.

Its subcellular location is the cytoplasm. The enzyme catalyses tRNA(Thr) + L-threonine + ATP = L-threonyl-tRNA(Thr) + AMP + diphosphate + H(+). Its function is as follows. Catalyzes the attachment of threonine to tRNA(Thr) in a two-step reaction: L-threonine is first activated by ATP to form Thr-AMP and then transferred to the acceptor end of tRNA(Thr). Also edits incorrectly charged L-seryl-tRNA(Thr). The sequence is that of Threonine--tRNA ligase from Ureaplasma parvum serovar 3 (strain ATCC 27815 / 27 / NCTC 11736).